Consider the following 834-residue polypeptide: Transcription intermediary factor 1-beta (834 aa).

Ala-2 is modified (N-acetylalanine). The segment covering 13–23 (AATAASAASGS) has biased composition (low complexity). The disordered stretch occupies residues 13-56 (AATAASAASGSPGSGEGSAGGEKRPAASSAAAASAAASSPAGGG). Residues Ser-23, Ser-26, and Ser-30 each carry the phosphoserine modification. A Glycyl lysine isopeptide (Lys-Gly) (interchain with G-Cter in SUMO2) cross-link involves residue Lys-35. Positions 38–52 (AASSAAAASAAASSP) are enriched in low complexity. Ser-51 bears the Phosphoserine mark. An RING-type zinc finger spans residues 66-122 (CGVCRERLRPERDPRLLPCLHSACSACLGPATPAAANNSGDGGSAGDGAMVDCPVCK). A Glycyl lysine isopeptide (Lys-Gly) (interchain with G-Cter in SUMO2) cross-link involves residue Lys-128. Residue Ser-139 is modified to Phosphoserine. The segment at 149–196 (DANQCCTSCEDNAPATSYCVECSEPLCETCVEAHQRVKYTKDHTVRST) adopts a B box-type 1 zinc-finger fold. Zn(2+) contacts are provided by Cys-154, Cys-157, Cys-178, and His-182. A Glycyl lysine isopeptide (Lys-Gly) (interchain with G-Cter in SUMO2) cross-link involves residue Lys-200. The B box-type 2 zinc-finger motif lies at 205–246 (ERTVYCNVHKHEPLVLFCESCDTLTCRDCQLNAHKDHQYQFL). Residues Cys-210, His-213, Cys-233, and His-238 each coordinate Zn(2+). The segment at 247 to 377 (EDAVRNQRKL…LIYFQLHRAL (131 aa)) is leucine zipper alpha helical coiled-coil region. The segment at 248 to 377 (DAVRNQRKLL…LIYFQLHRAL (130 aa)) is interaction with MAGEC2. Glycyl lysine isopeptide (Lys-Gly) (interchain with G-Cter in SUMO2) cross-links involve residues Lys-255 and Lys-262. N6-acetyllysine is present on Lys-267. Residue Lys-273 forms a Glycyl lysine isopeptide (Lys-Gly) (interchain with G-Cter in SUMO2) linkage. Residue Lys-305 is modified to N6-acetyllysine; alternate. Lys-305 participates in a covalent cross-link: Glycyl lysine isopeptide (Lys-Gly) (interchain with G-Cter in SUMO2); alternate. Lys-320 is covalently cross-linked (Glycyl lysine isopeptide (Lys-Gly) (interchain with G-Cter in SUMO2)). Lys-341 bears the N6-acetyllysine mark. Lys-367 participates in a covalent cross-link: Glycyl lysine isopeptide (Lys-Gly) (interchain with G-Cter in SUMO2). Positions 367–371 (KLIYF) are involved in binding PPP1CA. Lys-378 is subject to N6-acetyllysine; alternate. Residue Lys-378 forms a Glycyl lysine isopeptide (Lys-Gly) (interchain with G-Cter in SUMO2); alternate linkage. Lys-378 is covalently cross-linked (Glycyl lysine isopeptide (Lys-Gly) (interchain with G-Cter in SUMO1); alternate). Lys-408 participates in a covalent cross-link: Glycyl lysine isopeptide (Lys-Gly) (interchain with G-Cter in SUMO2). The segment at 412–480 (ERPGTNSTGP…SRSGEGEVSG (69 aa)) is disordered. Ser-418 is modified (phosphoserine). Lys-435 participates in a covalent cross-link: Glycyl lysine isopeptide (Lys-Gly) (interchain with G-Cter in SUMO2). Polar residues predominate over residues 435–444 (KQGSGSSQPM). Phosphoserine occurs at positions 438, 440, and 454. A Glycyl lysine isopeptide (Lys-Gly) (interchain with G-Cter in SUMO2); alternate cross-link involves residue Lys-469. Lys-469 participates in a covalent cross-link: Glycyl lysine isopeptide (Lys-Gly) (interchain with G-Cter in SUMO1); alternate. Arg-470 is subject to Citrulline. Ser-471 carries the post-translational modification Phosphoserine. Arg-472 is subject to Citrulline. Phosphoserine is present on residues Ser-473, Ser-479, and Ser-489. The HP1 box stretch occupies residues 476 to 513 (GEVSGLLRKVPRVSLERLDLDLTSDSQPPVFKVFPGST). Residues 481–494 (LLRKVPRVSLERLD) carry the PxVxL motif motif. A Phosphothreonine modification is found at Thr-498. Residue Ser-501 is modified to Phosphoserine. A Glycyl lysine isopeptide (Lys-Gly) (interchain with G-Cter in SUMO2) cross-link involves residue Lys-507. A Glycyl lysine isopeptide (Lys-Gly) (interchain with G-Cter in SUMO2); alternate cross-link involves residue Lys-554. A Glycyl lysine isopeptide (Lys-Gly) (interchain with G-Cter in SUMO); alternate cross-link involves residue Lys-554. Lys-575 is covalently cross-linked (Glycyl lysine isopeptide (Lys-Gly) (interchain with G-Cter in SUMO2)). Residues 581–602 (LTEGPGAEGPRLASPSGSTSSG) are disordered. Ser-594 is subject to Phosphoserine. Residues 625 to 672 (ATICRVCQKPGDLVMCNQCEFCFHLDCHLPALQDVPGEEWSCSLCHVL) form a PHD-type zinc finger. A Glycyl lysine isopeptide (Lys-Gly) (interchain with G-Cter in SUMO) cross-link involves residue Lys-676. Ser-683, Ser-689, and Ser-697 each carry phosphoserine. The Bromo domain maps to 695–799 (KLSPANQRKC…RFFETRMNDA (105 aa)). Lys-750 is covalently cross-linked (Glycyl lysine isopeptide (Lys-Gly) (interchain with G-Cter in SUMO2); alternate). Lys-750 participates in a covalent cross-link: Glycyl lysine isopeptide (Lys-Gly) (interchain with G-Cter in SUMO1); alternate. Residue Lys-750 forms a Glycyl lysine isopeptide (Lys-Gly) (interchain with G-Cter in SUMO); alternate linkage. Phosphoserine is present on Ser-752. Residue Tyr-755 is modified to Phosphotyrosine. Ser-757 carries the post-translational modification Phosphoserine. Residues Lys-770, Lys-774, and Lys-779 each carry the N6-acetyllysine; alternate modification. Residues Lys-770, Lys-774, and Lys-779 each participate in a glycyl lysine isopeptide (Lys-Gly) (interchain with G-Cter in SUMO2); alternate cross-link. A Glycyl lysine isopeptide (Lys-Gly) (interchain with G-Cter in SUMO1); alternate cross-link involves residue Lys-779. Ser-784 carries the post-translational modification Phosphoserine. Lys-804 participates in a covalent cross-link: Glycyl lysine isopeptide (Lys-Gly) (interchain with G-Cter in SUMO2). Ser-824 bears the Phosphoserine; by ATM and ATR and dsDNA kinase mark.

The protein belongs to the TRIM/RBCC family. Oligomer; the RBCC domain homotrimerizes and interacts with one molecule of KRAB to form the KRAB-KAP1 corepressor complex. Interacts with SETX. Binding to a KRAB domain is an absolute requirement for silencing gene expression. Interacts with a number of KRAB-ZFP proteins including ZNF10, ZFP53, ZFP68, ZNF382 and ZNF256. Interacts with NCOR1, NR3C1 and CHD3. Interacts with CEBPB (via the RING-type and PHD-type zinc fingers). Interacts with CBX5 (via the PxVxL motif); the interaction occurs in interphase nuclei and competes for binding POGZ. Interacts with POGZ; the interaction competes for interaction with CBX5. Interacts with SETDB1; the interaction is enhanced by KAP1 sumoylation, stimulates SETDB1 histone methyltransferase activity and gene silencing. Interacts (via the PHD-type zinc finger) with UBE2I; the interaction is required for sumoylation and repressor activity. Component of the TRIM28/KAP1-ERBB4-MDM2 complex involved in connecting growth factor and DNA damage responses. Interacts directly with ERBB4; the interaction represses ERBB4-mediated transcription activity. Interacts with MDM2; the interaction contributes to p53/TP53 inactivation. Component of the TRIM28/KAP1-MDM2-p53/TP53; involved in regulating p53/TP53 stabilization and activity. Interacts (via the leucine zipper alpha helical coiled-coil) with E2F1 (central region); the interaction inhibits E2F1 acetylation and transcriptional activity. Interacts with PPP1CA; the interaction dephosphorylates TRIM28 at Ser-824 and forms a complex at the p21 promoter site. Interacts with PPP1CB; the interaction is weak but is increased on dephosphorylation at Ser-824. Interacts with CEBPB and NR3C1. Interacts with CBX5 (via the PxVxL motif); the interaction occurs in interphase nuclei and competes for binding POGZ. Component of a ternary complex that includes TRIM28, a HP1 protein (CBX1, CBX3 OR CBX5), a KRAB domain-containing protein, and DNA. Interacts with SMARCAD1. Interacts with, and sumoylates IRF7. Interacts with MAGEC2. Part of a complex composed of TRIM28, HDAC1, HDAC2 and EHMT2. Interacts (via the RBCC domain) with KOX1 (via the KRAB domain), ZNF268 (via the KRAB domain) and ZNF300 (via the KRAB domain); the interactions increase KOX1, ZNF268 and ZNF300 nuclear localization activities. Interacts with AICDA. The large PER complex involved in the histone methylation is composed of at least PER2, CBX3, TRIM28, SUV39H1 and/or SUV39H2; CBX3 mediates the formation of the complex. Interacts with NR4A3; the interactions potentiates NR4A3 activity on NurRE promoter. Interacts (unphosphorylated or phosphorylated form) with ZBTB1 (via BTB domain). Probably part of a corepressor complex containing ZNF304, TRIM28, SETDB1 and DNMT1. Interacts with ATRX. Forms a complex with ATRX, SETDB1 and ZNF274. Interacts with ZFP568; the interaction mediates ZFP568 transcriptional repression activity. Interacts with RRP1B. Interacts with CRY1. Interacts with ZNF263; recruited to the SIX3 promoter along with other proteins involved in chromatin modification and transcriptional corepression where it contributes to transcriptional repression. Interacts with CYREN (via XLF motif). Interacts with TRIM17; this interaction prevents TRIM28 activity. Interacts with ZNF746. Interacts with PHF13. Interacts with ZNF354C. Interacts with ZNF432; the interaction is independent of PARP1. ATM-induced phosphorylation on Ser-824 represses sumoylation leading to the de-repression of expression of a subset of genes involved in cell cycle control and apoptosis in response to genotoxic stress. Dephosphorylation by the phosphatases, PPP1CA and PP1CB forms, allows sumoylation and expression of TRIM28 target genes. In terms of processing, sumoylation/desumoylation events regulate TRIM28-mediated transcriptional repression. Sumoylation is required for interaction with CHD3 and SETDB1 and the corepressor activity. Represses and is repressed by Ser-824 phosphorylation. Enhances the TRIM28 corepressor activity, inhibiting transcriptional activity of a number of genes including GADD45A and CDKN1A/p21. Lys-554, Lys-779 and Lys-804 are the major sites of sumoylation. In response to Dox-induced DNA damage, enhanced phosphorylation on Ser-824 prevents sumoylation and allows de-repression of CDKN1A/p21. Post-translationally, auto-ubiquitinated; enhanced by MAGEA2 and MAGEC2. Citrullinated by PADI4. In terms of processing, ADP-ribosylated by SIRT6, promoting TRIM28/KAP1 interaction with CBX5, thereby contributing to the packaging of LINE-1 retrotransposon elements into transcriptionally repressive heterochromatin.

Its subcellular location is the nucleus. It carries out the reaction S-ubiquitinyl-[E2 ubiquitin-conjugating enzyme]-L-cysteine + [acceptor protein]-L-lysine = [E2 ubiquitin-conjugating enzyme]-L-cysteine + N(6)-ubiquitinyl-[acceptor protein]-L-lysine.. It functions in the pathway protein modification; protein sumoylation. Its function is as follows. Nuclear corepressor for KRAB domain-containing zinc finger proteins (KRAB-ZFPs). Mediates gene silencing by recruiting CHD3, a subunit of the nucleosome remodeling and deacetylation (NuRD) complex, and SETDB1 (which specifically methylates histone H3 at 'Lys-9' (H3K9me)) to the promoter regions of KRAB target genes. Enhances transcriptional repression by coordinating the increase in H3K9me, the decrease in histone H3 'Lys-9 and 'Lys-14' acetylation (H3K9ac and H3K14ac, respectively) and the disposition of HP1 proteins to silence gene expression. Recruitment of SETDB1 induces heterochromatinization. May play a role as a coactivator for CEBPB and NR3C1 in the transcriptional activation of ORM1. Also a corepressor for ERBB4. Inhibits E2F1 activity by stimulating E2F1-HDAC1 complex formation and inhibiting E2F1 acetylation. May serve as a partial backup to prevent E2F1-mediated apoptosis in the absence of RB1. Important regulator of CDKN1A/p21(CIP1). Has E3 SUMO-protein ligase activity toward itself via its PHD-type zinc finger. Specifically sumoylates IRF7, thereby inhibiting its transactivation activity. Ubiquitinates p53/TP53 leading to its proteasomal degradation; the function is enhanced by MAGEC2 and MAGEA2, and possibly MAGEA3 and MAGEA6. Mediates the nuclear localization of KOX1, ZNF268 and ZNF300 transcription factors. Probably forms a corepressor complex required for activated KRAS-mediated promoter hypermethylation and transcriptional silencing of tumor suppressor genes (TSGs) or other tumor-related genes in colorectal cancer (CRC) cells. Required to maintain a transcriptionally repressive state of genes in undifferentiated embryonic stem cells (ESCs). In ESCs, in collaboration with SETDB1, is also required for H3K9me3 and silencing of endogenous and introduced retroviruses in a DNA-methylation independent-pathway. Associates at promoter regions of tumor suppressor genes (TSGs) leading to their gene silencing. The SETDB1-TRIM28-ZNF274 complex may play a role in recruiting ATRX to the 3'-exons of zinc-finger coding genes with atypical chromatin signatures to establish or maintain/protect H3K9me3 at these transcriptionally active regions. Acts as a corepressor for ZFP568. This Mus musculus (Mouse) protein is Transcription intermediary factor 1-beta.